A 216-amino-acid chain; its full sequence is GTP:AMP phosphotransferase, mitochondrial (216 aa).

Gly-15–Thr-20 is a binding site for GTP. The tract at residues Ser-35–Val-64 is NMPbind. AMP contacts are provided by residues Thr-36, Arg-41, Lys-62–Val-64, Gly-89–Arg-92, and Gln-96. The interval Asn-125–Asp-162 is LID. GTP-binding positions include Arg-126 and Val-135–Tyr-136. AMP is bound by residues Arg-159 and Arg-170. Thr-199 contributes to the GTP binding site.

It belongs to the adenylate kinase family. AK3 subfamily. In terms of assembly, monomer. In terms of tissue distribution, ubiquitously expressed with highest levels expressed in the abdomen, suggesting a function in muscle tissues.

The protein localises to the mitochondrion matrix. The enzyme catalyses a ribonucleoside 5'-triphosphate + AMP = a ribonucleoside 5'-diphosphate + ADP. In terms of biological role, involved in maintaining the homeostasis of cellular nucleotides by catalyzing the interconversion of nucleoside phosphates. Has GTP:AMP phosphotransferase and ITP:AMP phosphotransferase activities. This chain is GTP:AMP phosphotransferase, mitochondrial, found in Drosophila melanogaster (Fruit fly).